Here is a 21-residue protein sequence, read N- to C-terminus: Kassinatuerin-1 (21 aa).

Ile21 is modified (isoleucine amide).

As to expression, expressed by the skin dorsal glands.

It is found in the secreted. Its function is as follows. Shows broad-spectrum antimicrobial activity against the Gram-negative bacterium E.coli (MIC=6.25 uM), K.pneumoniae (MIC=25 uM), E.cloacae (MIC=6.25 uM), P.aeruginosa (MIC=25 uM), the Gram-positive bacterium S.aureus (MIC=6.25 uM), S.epidermidis (MIC=6.25 uM), E.faecalis (MIC=12.5 uM), and the fungus C.albicans (MIC=100 uM). Has no antimicrobial effect against P.mirabilis (MIC&gt;100 uM). Has relatively high cytolytic and hemolytic activities. Its alpha-helix has considerable amphipathic character. The chain is Kassinatuerin-1 from Kassina senegalensis (Senegal running frog).